A 190-amino-acid chain; its full sequence is Ubiquinol-cytochrome c reductase iron-sulfur subunit (190 aa).

A helical membrane pass occupies residues 18–39 (FLYYATAGAGTVAAGAAAWTLV). The Rieske domain occupies 95-188 (GQLIDRSAQN…AEFLDDTTIK (94 aa)). Cysteine 132, histidine 134, cysteine 152, and histidine 155 together coordinate [2Fe-2S] cluster. Cysteine 137 and cysteine 154 form a disulfide bridge.

The protein belongs to the Rieske iron-sulfur protein family. The main subunits of complex b-c1 are: cytochrome b, cytochrome c1 and the Rieske protein. Requires [2Fe-2S] cluster as cofactor.

The protein resides in the cell membrane. It carries out the reaction a quinol + 2 Fe(III)-[cytochrome c](out) = a quinone + 2 Fe(II)-[cytochrome c](out) + 2 H(+)(out). In terms of biological role, component of the ubiquinol-cytochrome c reductase complex (complex III or cytochrome b-c1 complex), which is a respiratory chain that generates an electrochemical potential coupled to ATP synthesis. The polypeptide is Ubiquinol-cytochrome c reductase iron-sulfur subunit (petA) (Paracoccus denitrificans).